The sequence spans 150 residues: Arginine repressor (150 aa).

It belongs to the ArgR family.

It localises to the cytoplasm. The protein operates within amino-acid biosynthesis; L-arginine biosynthesis [regulation]. In terms of biological role, regulates arginine biosynthesis genes. In Staphylococcus saprophyticus subsp. saprophyticus (strain ATCC 15305 / DSM 20229 / NCIMB 8711 / NCTC 7292 / S-41), this protein is Arginine repressor.